Reading from the N-terminus, the 180-residue chain is Beta-lactoglobulin-1/B (180 aa).

The N-terminal stretch at 1–18 (MKCLLLALGLALACGVQA) is a signal peptide. Cystine bridges form between Cys-84/Cys-178, Cys-124/Cys-137, and Cys-124/Cys-139.

The protein belongs to the calycin superfamily. Lipocalin family. Under physiological conditions beta-lactoglobulin exists as an equilibrium mixture of monomeric and dimeric forms. In terms of processing, alternate disulfide bonds occur in equal amounts.

The protein localises to the secreted. Its function is as follows. Lactoglobulin is the primary component of whey, it binds retinol and is probably involved in the transport of that molecule. In Ovis aries (Sheep), this protein is Beta-lactoglobulin-1/B.